The chain runs to 124 residues: Small ribosomal subunit protein uS13 (124 aa).

Residues 99 to 124 (RGQRTRTNARTRKGPRKTVGVMRKKS) form a disordered region. Residues 101–124 (QRTRTNARTRKGPRKTVGVMRKKS) show a composition bias toward basic residues.

It belongs to the universal ribosomal protein uS13 family. Part of the 30S ribosomal subunit. Forms a loose heterodimer with protein S19. Forms two bridges to the 50S subunit in the 70S ribosome.

Functionally, located at the top of the head of the 30S subunit, it contacts several helices of the 16S rRNA. In the 70S ribosome it contacts the 23S rRNA (bridge B1a) and protein L5 of the 50S subunit (bridge B1b), connecting the 2 subunits; these bridges are implicated in subunit movement. Contacts the tRNAs in the A and P-sites. This chain is Small ribosomal subunit protein uS13, found in Caldicellulosiruptor saccharolyticus (strain ATCC 43494 / DSM 8903 / Tp8T 6331).